The primary structure comprises 427 residues: Male abnormal protein mab-31 (427 aa).

The tract at residues P68 to K102 is disordered.

Its subcellular location is the nucleus. Putative transcription factor. Acts in a TGF-beta-like pathway during development of male-specific genital sensilla (simple sense organs), known as rays. Involved in production of reactive oxygen species (ROS), acting downstream of the TGF-beta-like dbl-1 signaling pathway. Involved in locomotory behavior. This chain is Male abnormal protein mab-31, found in Caenorhabditis elegans.